Consider the following 546-residue polypeptide: Probable protein kinase UbiB (546 aa).

A Protein kinase domain is found at 124 to 502 (DFEIKPLASA…HVRQGQSRYF (379 aa)). Residues 130–138 (LASASIAQV) and Lys153 contribute to the ATP site. Asp288 (proton acceptor) is an active-site residue. The next 2 membrane-spanning stretches (helical) occupy residues 501-521 (YFLG…VSRP) and 522-542 (EWGL…FVGW).

The protein belongs to the ABC1 family. UbiB subfamily.

The protein localises to the cell inner membrane. Its pathway is cofactor biosynthesis; ubiquinone biosynthesis [regulation]. Functionally, is probably a protein kinase regulator of UbiI activity which is involved in aerobic coenzyme Q (ubiquinone) biosynthesis. The sequence is that of Probable protein kinase UbiB from Shigella boydii serotype 18 (strain CDC 3083-94 / BS512).